Here is a 340-residue protein sequence, read N- to C-terminus: Ketol-acid reductoisomerase (NADP(+)) (340 aa).

Positions 1–182 (MRVYYDRDCD…GGGRSGIIET (182 aa)) constitute a KARI N-terminal Rossmann domain. NADP(+) contacts are provided by residues 24 to 27 (YGSQ), Arg-48, Ser-51, Ser-53, and 83 to 86 (DELQ). His-108 is a catalytic residue. NADP(+) is bound at residue Gly-134. Residues 183–329 (NFREECETDL…AKLREMMPWI (147 aa)) form the KARI C-terminal knotted domain. Residues Asp-191, Glu-195, Glu-227, and Glu-231 each contribute to the Mg(2+) site. Ser-252 is a substrate binding site.

It belongs to the ketol-acid reductoisomerase family. Mg(2+) is required as a cofactor.

The enzyme catalyses (2R)-2,3-dihydroxy-3-methylbutanoate + NADP(+) = (2S)-2-acetolactate + NADPH + H(+). The catalysed reaction is (2R,3R)-2,3-dihydroxy-3-methylpentanoate + NADP(+) = (S)-2-ethyl-2-hydroxy-3-oxobutanoate + NADPH + H(+). Its pathway is amino-acid biosynthesis; L-isoleucine biosynthesis; L-isoleucine from 2-oxobutanoate: step 2/4. It participates in amino-acid biosynthesis; L-valine biosynthesis; L-valine from pyruvate: step 2/4. Involved in the biosynthesis of branched-chain amino acids (BCAA). Catalyzes an alkyl-migration followed by a ketol-acid reduction of (S)-2-acetolactate (S2AL) to yield (R)-2,3-dihydroxy-isovalerate. In the isomerase reaction, S2AL is rearranged via a Mg-dependent methyl migration to produce 3-hydroxy-3-methyl-2-ketobutyrate (HMKB). In the reductase reaction, this 2-ketoacid undergoes a metal-dependent reduction by NADPH to yield (R)-2,3-dihydroxy-isovalerate. The protein is Ketol-acid reductoisomerase (NADP(+)) of Ruegeria sp. (strain TM1040) (Silicibacter sp.).